A 100-amino-acid polypeptide reads, in one-letter code: Small ribosomal subunit protein uS14m (100 aa).

This sequence belongs to the universal ribosomal protein uS14 family.

The protein localises to the mitochondrion. The sequence is that of Small ribosomal subunit protein uS14m (RPS14) from Brassica napus (Rape).